The chain runs to 160 residues: Transcription elongation factor GreA (160 aa).

A coiled-coil region spans residues 3-84 (NIVDDKILLT…SKAKIIKADL (82 aa)).

This sequence belongs to the GreA/GreB family.

Its function is as follows. Necessary for efficient RNA polymerase transcription elongation past template-encoded arresting sites. The arresting sites in DNA have the property of trapping a certain fraction of elongating RNA polymerases that pass through, resulting in locked ternary complexes. Cleavage of the nascent transcript by cleavage factors such as GreA or GreB allows the resumption of elongation from the new 3'terminus. GreA releases sequences of 2 to 3 nucleotides. The sequence is that of Transcription elongation factor GreA from Mesomycoplasma hyopneumoniae (strain J / ATCC 25934 / NCTC 10110) (Mycoplasma hyopneumoniae).